A 588-amino-acid polypeptide reads, in one-letter code: Calicin (588 aa).

Positions Trp-28–Glu-98 constitute a BTB domain. The BACK domain maps to Cys-133 to Phe-235. Ser-149 bears the Phosphoserine mark. Kelch repeat units lie at residues Ser-280–Arg-327, Tyr-328–Gly-375, Val-377–Asp-423, Asn-425–Gln-475, Asp-476–Ser-525, and Lys-526–Leu-580.

As to quaternary structure, interacts with CYLC1; the interaction may be relevant for proper acrosome attachment to the nuclear envelope.

It localises to the cytoplasm. It is found in the cytoskeleton. The protein localises to the perinuclear theca. Its subcellular location is the calyx. Functionally, required for both nuclear and acrosomal shaping during spermiogenesis. The protein is Calicin (Ccin) of Rattus norvegicus (Rat).